The primary structure comprises 372 residues: 3-dehydroquinate synthase (372 aa).

NAD(+) contacts are provided by residues 116–120 (GVVGD), 140–141 (TT), lysine 153, lysine 162, and 180–183 (TLNT). Residues glutamate 195, histidine 260, and histidine 277 each coordinate Zn(2+).

Belongs to the sugar phosphate cyclases superfamily. Dehydroquinate synthase family. Co(2+) serves as cofactor. Zn(2+) is required as a cofactor. It depends on NAD(+) as a cofactor.

Its subcellular location is the cytoplasm. The enzyme catalyses 7-phospho-2-dehydro-3-deoxy-D-arabino-heptonate = 3-dehydroquinate + phosphate. It participates in metabolic intermediate biosynthesis; chorismate biosynthesis; chorismate from D-erythrose 4-phosphate and phosphoenolpyruvate: step 2/7. Its function is as follows. Catalyzes the conversion of 3-deoxy-D-arabino-heptulosonate 7-phosphate (DAHP) to dehydroquinate (DHQ). The chain is 3-dehydroquinate synthase from Prochlorococcus marinus (strain MIT 9303).